A 118-amino-acid chain; its full sequence is Eukaryotic translation initiation factor 4E-binding protein 1 (118 aa).

Ser-2 is modified (N-acetylserine). The interval 27–48 (VQLPPGDYSTTPGGTLFSTTPG) is disordered. Residues 34–48 (YSTTPGGTLFSTTPG) show a composition bias toward polar residues. Residue Thr-37 is modified to Phosphothreonine; by MTOR. Thr-41 is subject to Phosphothreonine. Residue Ser-44 is modified to Phosphoserine. Thr-46 bears the Phosphothreonine; by MTOR mark. Phosphothreonine is present on Thr-50. The residue at position 54 (Tyr-54) is a Phosphotyrosine. The YXXXXLphi motif motif lies at 54–60 (YDRKFLM). Residue Lys-57 forms a Glycyl lysine isopeptide (Lys-Gly) (interchain with G-Cter in ubiquitin) linkage. Residues 64–118 (NSPVTKTPPRDLPTIPGVTSPTGDEPPTEARQNHLRSSPEDKPAGGEESQFEMDI) form a disordered region. Ser-65 is subject to Phosphoserine; by DYRK2, MAPK1, MAPK3 and MTOR. At Thr-70 the chain carries Phosphothreonine; by MTOR. At Thr-77 the chain carries Phosphothreonine. Phosphoserine is present on residues Ser-83 and Ser-100. Position 101 is a phosphoserine; by DYRK2 (Ser-101). A Phosphoserine modification is found at Ser-112. A TOS motif motif is present at residues 114–118 (FEMDI).

It belongs to the eIF4E-binding protein family. As to quaternary structure, hypophosphorylated EIF4EBP1 competes with EIF4G1/EIF4G3 to interact with EIF4E; insulin stimulated MAP-kinase (MAPK1 and MAPK3) or mTORC1 phosphorylation of EIF4EBP1 causes dissociation of the complex allowing EIF4G1/EIF4G3 to bind and consequent initiation of translation. Interacts (via TOS motif) with RPTOR; promoting phosphorylation by mTORC1. Phosphorylated on serine and threonine residues in response to insulin, EGF and PDGF. Phosphorylation at Thr-37, Thr-46, Ser-65 and Thr-70, corresponding to the hyperphosphorylated form, is regulated by mTORC1 and abolishes binding to EIF4E. In terms of processing, ubiquitinated: when eIF4E levels are low, hypophosphorylated form is ubiquitinated by the BCR(KLHL25) complex, leading to its degradation and serving as a homeostatic mechanism to maintain translation and prevent eIF4E inhibition when eIF4E levels are low. Not ubiquitinated when hyperphosphorylated (at Thr-37, Thr-46, Ser-65 and Thr-70) or associated with eIF4E.

It is found in the cytoplasm. The protein resides in the nucleus. Its function is as follows. Repressor of translation initiation that regulates EIF4E activity by preventing its assembly into the eIF4F complex: hypophosphorylated form competes with EIF4G1/EIF4G3 and strongly binds to EIF4E, leading to repress translation. In contrast, hyperphosphorylated form dissociates from EIF4E, allowing interaction between EIF4G1/EIF4G3 and EIF4E, leading to initiation of translation. Mediates the regulation of protein translation by hormones, growth factors and other stimuli that signal through the MAP kinase and mTORC1 pathways. The sequence is that of Eukaryotic translation initiation factor 4E-binding protein 1 (EIF4EBP1) from Bos taurus (Bovine).